The sequence spans 80 residues: Translation initiation factor IF-1 (80 aa).

Positions 6 to 80 (EKKKKDESDS…TSRGRIVYRR (75 aa)) constitute an S1-like domain.

Belongs to the IF-1 family. Component of the 30S ribosomal translation pre-initiation complex which assembles on the 30S ribosome in the order IF-2 and IF-3, IF-1 and N-formylmethionyl-tRNA(fMet); mRNA recruitment can occur at any time during PIC assembly.

It localises to the cytoplasm. Its function is as follows. One of the essential components for the initiation of protein synthesis. Stabilizes the binding of IF-2 and IF-3 on the 30S subunit to which N-formylmethionyl-tRNA(fMet) subsequently binds. Helps modulate mRNA selection, yielding the 30S pre-initiation complex (PIC). Upon addition of the 50S ribosomal subunit IF-1, IF-2 and IF-3 are released leaving the mature 70S translation initiation complex. The chain is Translation initiation factor IF-1 from Deinococcus radiodurans (strain ATCC 13939 / DSM 20539 / JCM 16871 / CCUG 27074 / LMG 4051 / NBRC 15346 / NCIMB 9279 / VKM B-1422 / R1).